The primary structure comprises 388 residues: Succinate--CoA ligase [ADP-forming] subunit beta (388 aa).

In terms of domain architecture, ATP-grasp spans 9–245 (KELLASYGLP…KSQENERELK (237 aa)). Residues lysine 46, 53–55 (GRG), glutamate 100, tyrosine 103, and glutamate 108 contribute to the ATP site. 2 residues coordinate Mg(2+): asparagine 200 and aspartate 214. Substrate is bound by residues asparagine 265 and 322-324 (GIV).

Belongs to the succinate/malate CoA ligase beta subunit family. As to quaternary structure, heterotetramer of two alpha and two beta subunits. Requires Mg(2+) as cofactor.

It catalyses the reaction succinate + ATP + CoA = succinyl-CoA + ADP + phosphate. The catalysed reaction is GTP + succinate + CoA = succinyl-CoA + GDP + phosphate. The protein operates within carbohydrate metabolism; tricarboxylic acid cycle; succinate from succinyl-CoA (ligase route): step 1/1. Succinyl-CoA synthetase functions in the citric acid cycle (TCA), coupling the hydrolysis of succinyl-CoA to the synthesis of either ATP or GTP and thus represents the only step of substrate-level phosphorylation in the TCA. The beta subunit provides nucleotide specificity of the enzyme and binds the substrate succinate, while the binding sites for coenzyme A and phosphate are found in the alpha subunit. In Neisseria meningitidis serogroup B (strain ATCC BAA-335 / MC58), this protein is Succinate--CoA ligase [ADP-forming] subunit beta.